Consider the following 197-residue polypeptide: MKSNSVLIPMVVEQHSRGERSYDIYSRLLKERIIFITGTIEDNMASSIVAQMLFLEAESLDKDIFLYINSPGGIITSGMSIYDTMQFIKPDVNTICIGQACSMAAFLLSSGTKGKRSCLPNARIMIHQPLGGYQGQASDIAIHAEEINKMKKKLNKLMSLNTGQSIKKINKDTERDCFLSAHESIKYGLIDLILTQR.

The Nucleophile role is filled by S102. H127 is a catalytic residue.

This sequence belongs to the peptidase S14 family. In terms of assembly, fourteen ClpP subunits assemble into 2 heptameric rings which stack back to back to give a disk-like structure with a central cavity, resembling the structure of eukaryotic proteasomes.

Its subcellular location is the cytoplasm. It catalyses the reaction Hydrolysis of proteins to small peptides in the presence of ATP and magnesium. alpha-casein is the usual test substrate. In the absence of ATP, only oligopeptides shorter than five residues are hydrolyzed (such as succinyl-Leu-Tyr-|-NHMec, and Leu-Tyr-Leu-|-Tyr-Trp, in which cleavage of the -Tyr-|-Leu- and -Tyr-|-Trp bonds also occurs).. Its function is as follows. Cleaves peptides in various proteins in a process that requires ATP hydrolysis. Has a chymotrypsin-like activity. Plays a major role in the degradation of misfolded proteins. The protein is ATP-dependent Clp protease proteolytic subunit of Buchnera aphidicola subsp. Schizaphis graminum (strain Sg).